Consider the following 239-residue polypeptide: Probable transcriptional regulator ycf27 (239 aa).

The 114-residue stretch at Lys7–Leu120 folds into the Response regulatory domain. At Asp56 the chain carries 4-aspartylphosphate. The segment at residues Asp76–Gly94 is a DNA-binding region (H-T-H motif). The segment at residues Gly135 to Asn236 is a DNA-binding region (ompR/PhoB-type).

It is found in the plastid. The protein resides in the cyanelle. In terms of biological role, probable promoter-specific protein mediating the interaction between DNA and RNA polymerase. The sequence is that of Probable transcriptional regulator ycf27 (ycf27) from Cyanophora paradoxa.